The sequence spans 692 residues: Junctophilin-2 (692 aa).

Residues 1-670 (MSGGRFDFDD…EVEVEEVPNT (670 aa)) are Cytoplasmic-facing. MORN repeat units lie at residues 14-36 (YCGG…KGQG), 38-59 (YSGS…SGNT), 60-79 (FEGY…TKGR), 82-104 (YKGE…NSGA), 106-128 (YEGT…DGGT), and 129-151 (YQGQ…PYGM). Phosphoserine occurs at positions 162 and 165. Disordered regions lie at residues 164 to 190 (SSLR…LPLP) and 246 to 273 (LSSG…AAPF). MORN repeat units follow at residues 285–307 (YMGE…SGLR) and 308–330 (YEGE…DGHR). The short motif at 345-359 (KRRVLPLKSNKVRQK) is the Bipartite nuclear localization signal element. Positions 439–661 (NSESLLEPRE…KEVAQEAEAE (223 aa)) are disordered. Residues Ser440, Ser442, and Ser462 each carry the phosphoserine modification. Residues 457–471 (ERPRESPQLHERETP) show a composition bias toward basic and acidic residues. Thr470 carries the post-translational modification Phosphothreonine. Positions 474-487 (EGGPPSPAGTPPQP) are enriched in pro residues. Ser479 is subject to Phosphoserine. At Thr483 the chain carries Phosphothreonine. The Nuclear localization signal motif lies at 488–492 (KRPRP). Phosphoserine occurs at positions 527 and 533. The segment covering 573-582 (PLEDEPEPEP) has biased composition (acidic residues). 4 positions are modified to phosphoserine: Ser589, Ser593, Ser604, and Ser609. Residues 627-640 (AEPKAKARKTEARG) show a composition bias toward basic and acidic residues. The chain crosses the membrane as a helical; Anchor for type IV membrane protein span at residues 671–691 (VLICMVILLNIGLAILFVHLL).

This sequence belongs to the junctophilin family. Interacts with TRPC3. Interacts with BAG5 and HSPA8; the interaction with HSPA8 is increased in the presence of BAG5. Junctophilin-2 N-terminal fragment: Interacts with MEF2C. Proteolytically cleaved by calpain in response to cardiac stress. The major cleavage site takes place at the C-terminus and leads to the release of the Junctophilin-2 N-terminal fragment chain (JP2NT). Post-translationally, phosphorylation on Ser-165, probably by PKC, affects RYR1-mediated calcium ion release, interaction with TRPC3, and skeletal muscle myotubule development.

Its subcellular location is the cell membrane. The protein resides in the sarcoplasmic reticulum membrane. The protein localises to the endoplasmic reticulum membrane. It is found in the nucleus. In terms of biological role, membrane-binding protein that provides a structural bridge between the plasma membrane and the sarcoplasmic reticulum and is required for normal excitation-contraction coupling in cardiomyocytes. Provides a structural foundation for functional cross-talk between the cell surface and intracellular Ca(2+) release channels by maintaining the 12-15 nm gap between the sarcolemma and the sarcoplasmic reticulum membranes in the cardiac dyads. Necessary for proper intracellular Ca(2+) signaling in cardiac myocytes via its involvement in ryanodine receptor-mediated calcium ion release. Contributes to the construction of skeletal muscle triad junctions. Its function is as follows. Transcription repressor required to safeguard against the deleterious effects of cardiac stress. Generated following cleavage of the Junctophilin-2 chain by calpain in response to cardiac stress in cardiomyocytes. Following cleavage and release from the membrane, translocates to the nucleus, binds DNA and represses expression of genes implicated in cell growth and differentiation, hypertrophy, inflammation and fibrosis. Modifies the transcription profile and thereby attenuates pathological remodeling in response to cardiac stress. Probably acts by competing with MEF2 transcription factors and TATA-binding proteins. This is Junctophilin-2 from Rattus norvegicus (Rat).